Reading from the N-terminus, the 91-residue chain is Small ribosomal subunit protein uS19 (91 aa).

It belongs to the universal ribosomal protein uS19 family.

In terms of biological role, protein S19 forms a complex with S13 that binds strongly to the 16S ribosomal RNA. The polypeptide is Small ribosomal subunit protein uS19 (Leptothrix cholodnii (strain ATCC 51168 / LMG 8142 / SP-6) (Leptothrix discophora (strain SP-6))).